The following is a 240-amino-acid chain: Enolase-phosphatase E1 (240 aa).

Belongs to the HAD-like hydrolase superfamily. MasA/MtnC family. Monomer. Mg(2+) serves as cofactor.

It catalyses the reaction 5-methylsulfanyl-2,3-dioxopentyl phosphate + H2O = 1,2-dihydroxy-5-(methylsulfanyl)pent-1-en-3-one + phosphate. Its pathway is amino-acid biosynthesis; L-methionine biosynthesis via salvage pathway; L-methionine from S-methyl-5-thio-alpha-D-ribose 1-phosphate: step 3/6. It functions in the pathway amino-acid biosynthesis; L-methionine biosynthesis via salvage pathway; L-methionine from S-methyl-5-thio-alpha-D-ribose 1-phosphate: step 4/6. In terms of biological role, bifunctional enzyme that catalyzes the enolization of 2,3-diketo-5-methylthiopentyl-1-phosphate (DK-MTP-1-P) into the intermediate 2-hydroxy-3-keto-5-methylthiopentenyl-1-phosphate (HK-MTPenyl-1-P), which is then dephosphorylated to form the acireductone 1,2-dihydroxy-3-keto-5-methylthiopentene (DHK-MTPene). This chain is Enolase-phosphatase E1, found in Saccharopolyspora erythraea (strain ATCC 11635 / DSM 40517 / JCM 4748 / NBRC 13426 / NCIMB 8594 / NRRL 2338).